A 398-amino-acid polypeptide reads, in one-letter code: Ornithine aminotransferase (398 aa).

At Lys256 the chain carries N6-(pyridoxal phosphate)lysine.

The protein belongs to the class-III pyridoxal-phosphate-dependent aminotransferase family. OAT subfamily. It depends on pyridoxal 5'-phosphate as a cofactor.

It is found in the cytoplasm. The enzyme catalyses a 2-oxocarboxylate + L-ornithine = L-glutamate 5-semialdehyde + an L-alpha-amino acid. It participates in amino-acid biosynthesis; L-proline biosynthesis; L-glutamate 5-semialdehyde from L-ornithine: step 1/1. Its function is as follows. Catalyzes the interconversion of ornithine to glutamate semialdehyde. In Oceanobacillus iheyensis (strain DSM 14371 / CIP 107618 / JCM 11309 / KCTC 3954 / HTE831), this protein is Ornithine aminotransferase.